A 310-amino-acid chain; its full sequence is 4-hydroxyproline 2-epimerase (310 aa).

C88 acts as the Proton acceptor in catalysis. Residues 89–90, H208, and D232 contribute to the substrate site; that span reads GH. Catalysis depends on C236, which acts as the Proton donor. 237-238 serves as a coordination point for substrate; it reads GT.

The protein belongs to the proline racemase family.

It carries out the reaction trans-4-hydroxy-L-proline = cis-4-hydroxy-D-proline. Catalyzes the epimerization of trans-4-hydroxy-L-proline (t4LHyp) to cis-4-hydroxy-D-proline (c4DHyp). Is likely involved in a degradation pathway that converts t4LHyp to alpha-ketoglutarate. Displays no proline racemase activity. The protein is 4-hydroxyproline 2-epimerase of Pseudomonas fluorescens (strain ATCC BAA-477 / NRRL B-23932 / Pf-5).